Reading from the N-terminus, the 350-residue chain is tRNA uridine(34) hydroxylase (350 aa).

The region spanning 146–240 (DDPDALFIDM…YARKAREQGL (95 aa)) is the Rhodanese domain. Residue cysteine 200 is the Cysteine persulfide intermediate of the active site.

Belongs to the TrhO family.

It catalyses the reaction uridine(34) in tRNA + AH2 + O2 = 5-hydroxyuridine(34) in tRNA + A + H2O. In terms of biological role, catalyzes oxygen-dependent 5-hydroxyuridine (ho5U) modification at position 34 in tRNAs, the first step in 5-carboxymethoxyuridine (cmo5U) biosynthesis. May be part of an alternate pathway, which is able to bypass cmo5U biogenesis in a subset of tRNAs under aerobic conditions. The chain is tRNA uridine(34) hydroxylase from Escherichia coli (strain SMS-3-5 / SECEC).